A 246-amino-acid chain; its full sequence is uncharacterized protein (246 aa).

2 disordered regions span residues 9 to 125 (CSRV…GAMA) and 155 to 203 (QPVR…EEKA). The span at 27–37 (GTRRQRQRPRQ) shows a compositional bias: basic residues. Composition is skewed to pro residues over residues 54 to 64 (PRPPTGPPARY) and 101 to 117 (EPRP…PPGS). Residues 161–176 (KLPKGKGRLRRPRQSR) are compositionally biased toward basic residues. Phosphothreonine is present on Thr179. 3 positions are modified to phosphoserine: Ser196, Ser210, and Ser220.

Its subcellular location is the cytoplasm. This is an uncharacterized protein from Mus musculus (Mouse).